Consider the following 419-residue polypeptide: L-rhamnose isomerase (419 aa).

Residues His-262, Asp-294, and Asp-296 each coordinate Mn(2+).

The protein belongs to the rhamnose isomerase family. In terms of assembly, homotetramer. Mn(2+) is required as a cofactor.

It localises to the cytoplasm. The catalysed reaction is L-rhamnopyranose = L-rhamnulose. Its pathway is carbohydrate degradation; L-rhamnose degradation; glycerone phosphate from L-rhamnose: step 1/3. Functionally, catalyzes the interconversion of L-rhamnose and L-rhamnulose. The polypeptide is L-rhamnose isomerase (Escherichia coli O45:K1 (strain S88 / ExPEC)).